The chain runs to 396 residues: Tyrosine--tRNA ligase (396 aa).

The 'HIGH' region motif lies at 39–48 (PTAPDLHLGH). Residues 223–227 (KMSKS) carry the 'KMSKS' region motif. Lysine 226 contributes to the ATP binding site. In terms of domain architecture, S4 RNA-binding spans 334-395 (LPVPQLLKQA…GKRKFARVTV (62 aa)).

The protein belongs to the class-I aminoacyl-tRNA synthetase family. TyrS type 2 subfamily. As to quaternary structure, homodimer.

It is found in the cytoplasm. The catalysed reaction is tRNA(Tyr) + L-tyrosine + ATP = L-tyrosyl-tRNA(Tyr) + AMP + diphosphate + H(+). Its function is as follows. Catalyzes the attachment of tyrosine to tRNA(Tyr) in a two-step reaction: tyrosine is first activated by ATP to form Tyr-AMP and then transferred to the acceptor end of tRNA(Tyr). In Thiobacillus denitrificans (strain ATCC 25259 / T1), this protein is Tyrosine--tRNA ligase.